The sequence spans 1103 residues: Ataxin-2 homolog (1103 aa).

A compositionally biased stretch (basic residues) spans 1–10; the sequence is MSQSKDKKKF. Positions 1-75 are disordered; it reads MSQSKDKKKF…QQQQQQQQPF (75 aa). Residues 11–28 are compositionally biased toward gly residues; the sequence is VGGGGGGGGNNSGGGGYG. 2 stretches are compositionally biased toward low complexity: residues 33–44 and 56–73; these read NNNNNNRNSSNN and HHQQ…QQQQ. Residues 84-166 form the Sm domain; sequence RTVFMSMSLV…FLQITATGVV (83 aa). Residues 258-287 adopt a coiled-coil conformation; it reads EFYKINQSVAEKKAQEIENEKSGNIHLLEE. 5 disordered regions span residues 305–474, 516–557, 615–763, 901–920, and 930–1103; these read VVRK…RESP, TNKS…APKS, LVIK…NNTT, HTMK…VQPQ, and QPQG…NQYH. The span at 312–356 shows a compositional bias: low complexity; it reads PTSTTSTTTSPPTQNPTPSSSVYIPPSKRNNNNNTPSTPSVTSPP. The segment covering 358–371 has biased composition (basic and acidic residues); sequence VDKKHQQTHQDKKQ. Positions 366–403 form a coiled coil; the sequence is HQDKKQTQQQQQQQQQQQQQQQQQQQQQQQQQQQQQTQ. The span at 372 to 463 shows a compositional bias: low complexity; the sequence is TQQQQQQQQQ…NNTPTATNTN (92 aa). Over residues 516 to 529 the composition is skewed to polar residues; the sequence is TNKSMNKSGSNIST. 3 stretches are compositionally biased toward low complexity: residues 530–544, 637–676, and 683–694; these read TPVN…NGTP, PTQL…TPST, and TTTPITTTILTE. Residues 691 to 730 adopt a coiled-coil conformation; sequence ILTENKSDDKEKEKEKEKEKVDEKEKEKEKEKSDEKDKDQ. The span at 695-741 shows a compositional bias: basic and acidic residues; sequence NKSDDKEKEKEKEKEKVDEKEKEKEKEKSDEKDKDQSSTLVEKKDES. The segment covering 742 to 763 has biased composition (low complexity); that stretch reads SSSSNTTTTTTNTTNNNNNNTT. A compositionally biased stretch (low complexity) spans 930–957; it reads QPQGGVVQPSAGGAPKTMYQQQQQQQQQ. The span at 960 to 969 shows a compositional bias: gly residues; sequence QPGGPMGVQR. A compositionally biased stretch (low complexity) spans 974–984; the sequence is PPQQQPQQQQQ. Over residues 1020–1031 the composition is skewed to pro residues; it reads YAVPHPQYPMPP. Residues 1062-1076 are compositionally biased toward low complexity; sequence QVVSQNSPQQDSPSN.

Belongs to the ataxin-2 family.

The polypeptide is Ataxin-2 homolog (atxn2) (Dictyostelium discoideum (Social amoeba)).